A 112-amino-acid chain; its full sequence is High mobility group protein D (112 aa).

The HMG box DNA-binding region spans 5 to 71; the sequence is PKRPLSAYML…DYDRAVKEFE (67 aa). Phosphoserine is present on Ser-10. Residue Tyr-12 is modified to Phosphotyrosine. Positions 72–112 are disordered; sequence ANGGSSAANGGGAKKRAKPAKKVAKKSKKEESDEDDDDESE. Basic residues predominate over residues 84 to 98; the sequence is AKKRAKPAKKVAKKS. A phosphoserine mark is found at Ser-103 and Ser-111. A compositionally biased stretch (acidic residues) spans 103-112; sequence SDEDDDDESE.

The protein belongs to the HMGB family.

Its subcellular location is the nucleus. It is found in the chromosome. In terms of biological role, binds preferentially single-stranded DNA and unwinds double-stranded DNA. Prefers sites containing the sequence 5'-ttg-3'. Facilitates DNA bending. Associated with early embryonic chromatin in the absence of histone H1. The polypeptide is High mobility group protein D (HmgD) (Drosophila melanogaster (Fruit fly)).